Reading from the N-terminus, the 24-residue chain is Cytochrome c3-2 (24 aa).

Residues 1-24 (GNAPAADMVLKAPGDAKMTKTAVP) form a disordered region.

Binds 4 heme groups per subunit.

It is found in the periplasm. In terms of biological role, participates in sulfate respiration coupled with phosphorylation by transferring electrons from the enzyme dehydrogenase to ferredoxin. This chain is Cytochrome c3-2, found in Nitratidesulfovibrio vulgaris (Desulfovibrio vulgaris).